The sequence spans 149 residues: Pleckstrin homology domain-containing family J member 1 (149 aa).

A PH domain is found at 15-108 (PAEMAAELGM…WMEALRRASY (94 aa)).

Expressed in testis and liver.

This Homo sapiens (Human) protein is Pleckstrin homology domain-containing family J member 1 (PLEKHJ1).